The sequence spans 335 residues: Protein BRASSINAZOLE-RESISTANT 2 (335 aa).

Over residues M1 to A19 the composition is skewed to low complexity. 3 disordered regions span residues M1–R40, T85–P122, and P164–P190. The interval R22–R103 is required for DNA-binding. The span at G99 to D120 shows a compositional bias: polar residues. T175 carries the phosphothreonine modification. The tract at residues H231–H251 is PEST-like.

The protein belongs to the BZR/LAT61 family. Interacts with ASK7/BIN2 through its C-terminal domain and with the bHLH transcription factors BIM1, BIM2 and BIM3 through its C- and N-terminal domains. Interacts (via N-terminus) with REF6 and ELF6. Interacts with MYB30. Interacts with IWS1. Interacts with ASHH2/SDG8. Binds to MYB56 when dephosphorylated in the nucleus of quiescent center (QC) cells. Binds to WRKY46, WRKY54 and WRKY70 to cooperatively regulate the expression of target genes. In terms of processing, phosphorylated by ASK7/BIN2. Phosphorylation increases protein degradation and/or interferes with the nuclear localization. Ubiquitously expressed in cotyledons, leaves, hypocotyls and roots.

Its subcellular location is the nucleus. It localises to the cytoplasm. Its function is as follows. Positive regulator of brassinosteroid (BR) signaling. Transcription factor that activates target gene expression by binding specifically to the DNA sequence 5'-CANNTG-3'(E box) through its N-terminal domain. Can bind individually to the promoter as a homodimer or synergistically as a heterodimer with BIM1, BIM2 or BIM3. The C-terminal domain is probably involved in transcriptional activation. Recruits the transcription elongation factor IWS1 to control BR-regulated gene expression. Forms a trimeric complex with IWS1 and ASHH2/SDG8 to regulate BR-regulated gene expression. Promotes quiescent center (QC) self-renewal by cell divisions in the primary root. Binds to the E-boxes of the BRAVO promoter to repress its expression. The chain is Protein BRASSINAZOLE-RESISTANT 2 from Arabidopsis thaliana (Mouse-ear cress).